Reading from the N-terminus, the 323-residue chain is MSVRSLYGISGLRISTRTFSKTAFRLQEQVNQTQESTDTEINGRPLVPANLKNAKGERLMIPSKLQENALRNYELERLRIIPKLNTFYGGNPVHEENLNTLNGLIRKYINLPTRIVDDKEIQNTKFVSFEEYKTRIQSGTRLKPIHHKELTQLLHRLRSIDPELMPREVSDVLAKFANTSSESAKAAQKVKTLDEFGRAISLGKRKRSVAKVYLTKGDGQVMVNGKSLLEYFPKEADRRRIAYPFQVVSQEGQYNVFAEVQSGGSTGQAEAVMYGIAKDLVIFNPLLKSRLHKSGLMTRDARKVERKKPGKVKARKSPTWVKR.

The interval 298 to 323 (TRDARKVERKKPGKVKARKSPTWVKR) is disordered. The segment covering 304-323 (VERKKPGKVKARKSPTWVKR) has biased composition (basic residues).

It belongs to the universal ribosomal protein uS9 family.

Its subcellular location is the mitochondrion. This is Small ribosomal subunit protein uS9m (MRPS9) from Debaryomyces hansenii (strain ATCC 36239 / CBS 767 / BCRC 21394 / JCM 1990 / NBRC 0083 / IGC 2968) (Yeast).